Here is a 351-residue protein sequence, read N- to C-terminus: Probable NADP-dependent isopropanol dehydrogenase (351 aa).

Zn(2+) is bound by residues Cys37, His59, Glu60, and Asp150. Residues 175-178 (AGPV), 198-200 (DSR), 265-267 (VNY), and Lys340 each bind NADP(+).

Belongs to the zinc-containing alcohol dehydrogenase family. Requires Zn(2+) as cofactor.

It carries out the reaction propan-2-ol + NADP(+) = acetone + NADPH + H(+). Its function is as follows. Alcohol dehydrogenase with a preference for medium chain secondary alcohols, such as 2-butanol and isopropanol. Has very low activity with primary alcohols, such as ethanol. Under physiological conditions, the enzyme reduces aldehydes and 2-ketones to produce secondary alcohols. Is also active with acetaldehyde and propionaldehyde. The chain is Probable NADP-dependent isopropanol dehydrogenase (adh) from Mycoplasma pneumoniae (strain ATCC 29342 / M129 / Subtype 1) (Mycoplasmoides pneumoniae).